The sequence spans 409 residues: MASLADGGKRRVSYFYEPMIGDYYYGVNQPTKPQRIRVTHNLILSYNLHRHMEINHPDLADASDFEKFHSLEYINFLKSVTPETVTDPHPSVSENLKRFNVDVDWDGPVFHNLFDYCRAYAGGSISAAAKLNRQEADIAINWAGGMHHVKKDKASGFGYVNDVVLAILELLKSFKRVLYIEIGFPHGDEVEEAFKDTDRVMTVSFHKVGDTGDISDYGEGKGQYYSLNAPLKDGLDDFSLRGLFIPVIHRAMEIYEPEVIVLQCGADSLAGDPFGTFNLSIKGHGDCLQYVRSFNVPLMILGGGGYTLPNVARCWCYETAIAVGEQLDNDLPGNDYMKYFRPDYKLHILPTNRQNLNTRLDIITMRETLLAQLSLVMHAPSVPFQDTPSSSQATEAAEVDMEKRNDPRI.

Residues 11 to 324 (RVSYFYEPMI…WCYETAIAVG (314 aa)) form a histone deacetylase region. His148 (proton donor/acceptor) is an active-site residue. Position 267 (Asp267) interacts with Zn(2+). The disordered stretch occupies residues 383–409 (PFQDTPSSSQATEAAEVDMEKRNDPRI). Residues 384 to 394 (FQDTPSSSQAT) show a composition bias toward polar residues. Positions 400-409 (DMEKRNDPRI) are enriched in basic and acidic residues.

It belongs to the histone deacetylase family. HD type 1 subfamily. The cofactor is Zn(2+). In terms of tissue distribution, low expression in flowers.

It localises to the nucleus. The catalysed reaction is N(6)-acetyl-L-lysyl-[histone] + H2O = L-lysyl-[histone] + acetate. Functionally, responsible for the deacetylation of lysine residues on the N-terminal part of the core histones (H2A, H2B, H3 and H4). Histone deacetylation gives a tag for epigenetic repression and plays an important role in transcriptional regulation, cell cycle progression and developmental events. May be involved in flowering induction. Histone deacetylases act via the formation of large multiprotein complexes. The polypeptide is Histone deacetylase 7 (HDA7) (Arabidopsis thaliana (Mouse-ear cress)).